The following is a 229-amino-acid chain: Potassium/proton antiporter CemA (229 aa).

Transmembrane regions (helical) follow at residues Phe-7–Phe-27, Ile-114–Leu-134, Ile-154–Val-174, and Ile-189–Ile-209.

It belongs to the CemA family.

The protein resides in the plastid. Its subcellular location is the chloroplast inner membrane. It carries out the reaction K(+)(in) + H(+)(out) = K(+)(out) + H(+)(in). Functionally, contributes to K(+)/H(+) antiport activity by supporting proton efflux to control proton extrusion and homeostasis in chloroplasts in a light-dependent manner to modulate photosynthesis. Prevents excessive induction of non-photochemical quenching (NPQ) under continuous-light conditions. Indirectly promotes efficient inorganic carbon uptake into chloroplasts. This Coffea arabica (Arabian coffee) protein is Potassium/proton antiporter CemA.